We begin with the raw amino-acid sequence, 183 residues long: Capsid protein (183 aa).

A disordered region spans residues 136–183 (NAPILSTLPETTVVRRRGRSPRRRTPSPRRRRSQSPRRRRSQSRESQC). Over residues 149–176 (VRRRGRSPRRRTPSPRRRRSQSPRRRRS) the composition is skewed to basic residues. A phosphoserine; by host mark is found at Ser155, Ser162, and Ser170. One copy of the 1; half-length repeat lies at 155-161 (SPRRRTP). The segment at 155–177 (SPRRRTPSPRRRRSQSPRRRRSQ) is 3 X 8 AA repeats of S-P-R-R-R-[PR]-S-Q. The Bipartite nuclear localization signal motif lies at 158-175 (RRTPSPRRRRSQSPRRRR). Repeat copies occupy residues 162–169 (SPRRRRSQ) and 170–177 (SPRRRRSQ). An RNA binding region spans residues 177 to 183 (QSRESQC).

It belongs to the orthohepadnavirus core antigen family. As to quaternary structure, homodimerizes, then multimerizes. Interacts with cytosol exposed regions of viral L glycoprotein present in the reticulum-to-Golgi compartment. Interacts with human FLNB. Phosphorylated form interacts with host importin alpha; this interaction depends on the exposure of the NLS, which itself depends upon genome maturation and/or phosphorylation of the capsid protein. Interacts with host NUP153. Phosphorylated by host SRPK1, SRPK2, and maybe protein kinase C or GAPDH. Phosphorylation is critical for pregenomic RNA packaging. Protein kinase C phosphorylation is stimulated by HBx protein and may play a role in transport of the viral genome to the nucleus at the late step during the viral replication cycle.

The protein resides in the virion. It localises to the host cytoplasm. Its function is as follows. Self assembles to form an icosahedral capsid. Most capsids appear to be large particles with an icosahedral symmetry of T=4 and consist of 240 copies of capsid protein, though a fraction forms smaller T=3 particles consisting of 180 capsid proteins. Entering capsids are transported along microtubules to the nucleus. Phosphorylation of the capsid is thought to induce exposure of nuclear localization signal in the C-terminal portion of the capsid protein that allows binding to the nuclear pore complex via the importin (karyopherin-) alpha and beta. Capsids are imported in intact form through the nuclear pore into the nuclear basket, where it probably binds NUP153. Only capsids that contain the mature viral genome can release the viral DNA and capsid protein into the nucleoplasm. Immature capsids get stuck in the basket. Capsids encapsulate the pre-genomic RNA and the P protein. Pre-genomic RNA is reverse-transcribed into DNA while the capsid is still in the cytoplasm. The capsid can then either be directed to the nucleus, providing more genomes for transcription, or bud through the endoplasmic reticulum to provide new virions. The polypeptide is Capsid protein (Homo sapiens (Human)).